The following is a 180-amino-acid chain: Tubulin polymerization-promoting protein homolog (180 aa).

Composition is skewed to basic and acidic residues over residues 136 to 158 (TGAHKERFDAEGKGKGKSGRADT) and 169 to 180 (KNKDSYDKTHGK). Residues 136–180 (TGAHKERFDAEGKGKGKSGRADTTENTGYVGAYKNKDSYDKTHGK) form a disordered region.

The protein belongs to the TPPP family.

Regulator of microtubule dynamics. In Caenorhabditis elegans, this protein is Tubulin polymerization-promoting protein homolog.